Here is a 77-residue protein sequence, read N- to C-terminus: Cell division topological specificity factor (77 aa).

This sequence belongs to the MinE family.

Prevents the cell division inhibition by proteins MinC and MinD at internal division sites while permitting inhibition at polar sites. This ensures cell division at the proper site by restricting the formation of a division septum at the midpoint of the long axis of the cell. This is Cell division topological specificity factor from Nautilia profundicola (strain ATCC BAA-1463 / DSM 18972 / AmH).